Reading from the N-terminus, the 296-residue chain is NH(3)-dependent NAD(+) synthetase (296 aa).

30-37 (GVSGGLDS) contributes to the ATP binding site. D36 lines the Mg(2+) pocket. Residue R157 participates in deamido-NAD(+) binding. E182 provides a ligand contact to Mg(2+). Positions 190 and 197 each coordinate deamido-NAD(+). ATP contacts are provided by K206 and S228.

Belongs to the NAD synthetase family. As to quaternary structure, homodimer.

The catalysed reaction is deamido-NAD(+) + NH4(+) + ATP = AMP + diphosphate + NAD(+) + H(+). The protein operates within cofactor biosynthesis; NAD(+) biosynthesis; NAD(+) from deamido-NAD(+) (ammonia route): step 1/1. Catalyzes the ATP-dependent amidation of deamido-NAD to form NAD. Uses ammonia as a nitrogen source. In Coprothermobacter proteolyticus (strain ATCC 35245 / DSM 5265 / OCM 4 / BT), this protein is NH(3)-dependent NAD(+) synthetase.